A 980-amino-acid polypeptide reads, in one-letter code: Ovochymase-2 (980 aa).

Residues 1–21 (MAETSVFSIMMLTVMTAVGRG) form the signal peptide. Positions 22-49 (ATDRPGRVSRCGERPSANASVTYNLLSR) are cleaved as a propeptide — activation peptide. Asparagine 39 carries an N-linked (GlcNAc...) asparagine glycan. A Peptidase S1 1 domain is found at 50 to 299 (IVGGTSAVKG…LLNWLSANLN (250 aa)). A disulfide bridge connects residues cysteine 75 and cysteine 91. The Charge relay system role is filled by histidine 90. Residues valine 112 and glutamate 117 each coordinate Ca(2+). The Charge relay system role is filled by aspartate 140. Cystine bridges form between cysteine 174–cysteine 244, cysteine 205–cysteine 223, cysteine 234–cysteine 263, cysteine 312–cysteine 342, cysteine 369–cysteine 388, cysteine 435–cysteine 462, cysteine 489–cysteine 510, cysteine 618–cysteine 634, cysteine 716–cysteine 779, cysteine 744–cysteine 757, and cysteine 769–cysteine 798. The active-site Charge relay system is serine 238. CUB domains lie at 312–425 (CSTN…YQAV) and 435–547 (CGSV…ISFV). A Peptidase S1 2 domain is found at 593–822 (IIKAEEAMPN…FIPWIMETIL (230 aa)). The propeptide at 593 to 980 (IIKAEEAMPN…WLSYSFHNQN (388 aa)) is activation peptide. N-linked (GlcNAc...) asparagine glycosylation occurs at asparagine 766. The disordered stretch occupies residues 835–863 (HHPLIPPDKLSQEKALLPDSPPSNDSSSS). Residues asparagine 858 and asparagine 932 are each glycosylated (N-linked (GlcNAc...) asparagine).

The protein belongs to the peptidase S1 family. In terms of processing, the catalytically inactive 108 kDa form is processed both N- and C-terminally to give rise to catalytically active and inactive forms. As to expression, differentially expressed in the oviductal pars recta (PR) region.

The protein resides in the secreted. It carries out the reaction Preferential cleavage at 371-Gly-Ser-Arg-|-Trp-374 of glycoprotein gp43 in Xenopus laevis coelemic egg envelope to yield gp41.. Functionally, mediates gamete interaction by affecting the vitelline coat. This chain is Ovochymase-2 (OVCH2), found in Rhinella arenarum (Argentine common toad).